A 1016-amino-acid chain; its full sequence is Nonsense-mediated mRNA decay factor SMG5 (1016 aa).

Residue serine 2 is modified to N-acetylserine. 2 positions are modified to phosphoserine: serine 2 and serine 423. 2 disordered regions span residues 408-561 (NPVP…PSEA) and 594-637 (PTTN…RSCR). The span at 449 to 466 (KSRKFSRLSCLRRRRHPP) shows a compositional bias: basic residues. Residues 594–603 (PTTNPHTSAS) are compositionally biased toward polar residues. Positions 619–628 (ASEEGSESEG) are enriched in acidic residues. The stretch at 798-841 (QSEQESLLQQAQAQFRMAQEEARRNRLMRDMAQLRLQLEVSQLE) forms a coiled coil. The region spanning 872–995 (RQLATSGRFI…GPMQAALQAA (124 aa)) is the PINc domain.

Interacts with TERT, PPP2CA and SMG1. Part of a complex that contains SMG1, SMG5, SMG7, PPP2CA, a short isoform of UPF3A (isoform UPF3AS, but not isoform UPF3AL) and phosphorylated UPF1. Not detected in complexes that contain unphosphorylated UPF1. In terms of tissue distribution, ubiquitous.

It localises to the cytoplasm. The protein resides in the nucleus. Plays a role in nonsense-mediated mRNA decay. Does not have RNase activity by itself. Promotes dephosphorylation of UPF1. Together with SMG7 is thought to provide a link to the mRNA degradation machinery involving exonucleolytic pathways, and to serve as an adapter for UPF1 to protein phosphatase 2A (PP2A), thereby triggering UPF1 dephosphorylation. Necessary for TERT activity. The chain is Nonsense-mediated mRNA decay factor SMG5 from Homo sapiens (Human).